The following is a 545-amino-acid chain: Hyaluronidase PH-20 (545 aa).

Positions 1–35 (MGVLKFKHIFFGSAVELSGVFQIVFIFLLIPCCLT) are cleaved as a signal peptide. Disulfide bonds link cysteine 60–cysteine 355 and cysteine 224–cysteine 239. Asparagine 82 is a glycosylation site (N-linked (GlcNAc...) asparagine). Glutamate 148 acts as the Proton donor in catalysis. Asparagine 180 carries N-linked (GlcNAc...) asparagine glycosylation. Residue asparagine 372 is glycosylated (N-linked (GlcNAc...) asparagine). 3 disulfides stabilise this stretch: cysteine 380–cysteine 391, cysteine 385–cysteine 439, and cysteine 441–cysteine 468.

It belongs to the glycosyl hydrolase 56 family. Testis.

It localises to the cell membrane. The enzyme catalyses Random hydrolysis of (1-&gt;4)-linkages between N-acetyl-beta-D-glucosamine and D-glucuronate residues in hyaluronate.. Functionally, involved in sperm-egg adhesion. Upon fertilization sperm must first penetrate a layer of cumulus cells that surrounds the egg before reaching the zona pellucida. The cumulus cells are embedded in a matrix containing hyaluronic acid which is formed prior to ovulation. This protein aids in penetrating the layer of cumulus cells by digesting hyaluronic acid. The chain is Hyaluronidase PH-20 (SPAM1) from Oryctolagus cuniculus (Rabbit).